The chain runs to 105 residues: Translation initiation factor 1A (105 aa).

The S1-like domain occupies 18–92 (IRVKLPNKRI…DKCDIIYRYT (75 aa)).

Belongs to the eIF-1A family.

In terms of biological role, seems to be required for maximal rate of protein biosynthesis. Enhances ribosome dissociation into subunits and stabilizes the binding of the initiator Met-tRNA(I) to 40 S ribosomal subunits. The sequence is that of Translation initiation factor 1A (eIF1A) from Methanocorpusculum labreanum (strain ATCC 43576 / DSM 4855 / Z).